A 350-amino-acid chain; its full sequence is GTPase Obg (350 aa).

In terms of domain architecture, Obg spans 1–159; sequence MKLVDEAEIL…RLLKLELRLL (159 aa). The interval 127–146 is disordered; it reads NMHFKSSVNRAPRQSTTGEE. The span at 130-143 shows a compositional bias: polar residues; that stretch reads FKSSVNRAPRQSTT. Residues 160 to 337 enclose the OBG-type G domain; that stretch reads ADVGLLGFPN…IMKDVMAFFD (178 aa). Residues 166–173, 191–195, 213–216, 287–290, and 318–320 contribute to the GTP site; these read GFPNAGKS, FTTLY, DVPG, NKAD, and SAL. Positions 173 and 193 each coordinate Mg(2+).

This sequence belongs to the TRAFAC class OBG-HflX-like GTPase superfamily. OBG GTPase family. In terms of assembly, monomer. Mg(2+) serves as cofactor.

Its subcellular location is the cytoplasm. An essential GTPase which binds GTP, GDP and possibly (p)ppGpp with moderate affinity, with high nucleotide exchange rates and a fairly low GTP hydrolysis rate. Plays a role in control of the cell cycle, stress response, ribosome biogenesis and in those bacteria that undergo differentiation, in morphogenesis control. In Xanthomonas oryzae pv. oryzae (strain MAFF 311018), this protein is GTPase Obg.